A 397-amino-acid polypeptide reads, in one-letter code: Tryptophan synthase beta chain (397 aa).

Lys88 carries the post-translational modification N6-(pyridoxal phosphate)lysine.

The protein belongs to the TrpB family. In terms of assembly, tetramer of two alpha and two beta chains. Requires pyridoxal 5'-phosphate as cofactor.

The catalysed reaction is (1S,2R)-1-C-(indol-3-yl)glycerol 3-phosphate + L-serine = D-glyceraldehyde 3-phosphate + L-tryptophan + H2O. It participates in amino-acid biosynthesis; L-tryptophan biosynthesis; L-tryptophan from chorismate: step 5/5. In terms of biological role, the beta subunit is responsible for the synthesis of L-tryptophan from indole and L-serine. This is Tryptophan synthase beta chain from Haemophilus influenzae (strain 86-028NP).